A 361-amino-acid chain; its full sequence is GDSL esterase/lipase At4g18970 (361 aa).

The N-terminal stretch at 1–22 (MARVCVMMMAMAIAMAMNIAMG) is a signal peptide. The Nucleophile role is filled by serine 35. Active-site residues include aspartate 325 and histidine 328.

The protein belongs to the 'GDSL' lipolytic enzyme family.

The protein resides in the secreted. In Arabidopsis thaliana (Mouse-ear cress), this protein is GDSL esterase/lipase At4g18970.